Consider the following 258-residue polypeptide: uncharacterized protein (258 aa).

This is an uncharacterized protein from Escherichia coli O157:H7.